The primary structure comprises 121 residues: Glycine cleavage system H protein (121 aa).

Positions 22 to 102 (IAWVGITKYA…DSSVWLFKAE (81 aa)) constitute a Lipoyl-binding domain. Lys-63 is modified (N6-lipoyllysine).

It belongs to the GcvH family. As to quaternary structure, the glycine cleavage system is composed of four proteins: P, T, L and H. The cofactor is (R)-lipoate.

The glycine cleavage system catalyzes the degradation of glycine. The H protein shuttles the methylamine group of glycine from the P protein to the T protein. The polypeptide is Glycine cleavage system H protein (Tropheryma whipplei (strain TW08/27) (Whipple's bacillus)).